Here is a 218-residue protein sequence, read N- to C-terminus: Small ribosomal subunit protein uS3c (218 aa).

The KH type-2 domain maps to 47–118; sequence VQKEMRISSG…RLNVVITRVA (72 aa).

The protein belongs to the universal ribosomal protein uS3 family. As to quaternary structure, part of the 30S ribosomal subunit.

It is found in the plastid. The protein resides in the chloroplast. This chain is Small ribosomal subunit protein uS3c (rps3), found in Ceratophyllum demersum (Rigid hornwort).